A 374-amino-acid polypeptide reads, in one-letter code: uncharacterized protein (374 aa).

Residues 298 to 332 adopt a coiled-coil conformation; it reads TKEKLLKLHSEQKSLSEKINKLSGEKDIEQSMINN.

This is an uncharacterized protein from Acanthamoeba polyphaga (Amoeba).